Here is a 156-residue protein sequence, read N- to C-terminus: Cyclic pyranopterin monophosphate synthase (156 aa).

Residues 75–77 (LCH) and 111–112 (ME) contribute to the substrate site. Residue D126 is part of the active site.

It belongs to the MoaC family. Homohexamer; trimer of dimers.

The catalysed reaction is (8S)-3',8-cyclo-7,8-dihydroguanosine 5'-triphosphate = cyclic pyranopterin phosphate + diphosphate. It participates in cofactor biosynthesis; molybdopterin biosynthesis. Functionally, catalyzes the conversion of (8S)-3',8-cyclo-7,8-dihydroguanosine 5'-triphosphate to cyclic pyranopterin monophosphate (cPMP). This is Cyclic pyranopterin monophosphate synthase from Caulobacter sp. (strain K31).